The following is a 989-amino-acid chain: Voltage-gated delayed rectifier potassium channel KCNH1 (989 aa).

Residues 1–220 lie on the Cytoplasmic side of the membrane; that stretch reads MTMAGGRRGL…LHYCVFKTTW (220 aa). In terms of domain architecture, PAS spans 14–94; the sequence is QNTFLENIVR…QTFENYEMNS (81 aa). In terms of domain architecture, PAC spans 93-145; the sequence is NSFEILMYKKNRTPVWFFVKIAPIRNEQDKVVLFLCTFSDITAFKQPIEDDSC. The tract at residues 151-162 is required for phosphatidylinositol bisphosphate binding; the sequence is FARLTRALTSSR. The helical transmembrane segment at 221–241 threads the bilayer; sequence DWIILILTFYTAILVPYNVSF. Residues 242 to 248 are Extracellular-facing; the sequence is KTRQNNV. Residues 249 to 269 traverse the membrane as a helical segment; that stretch reads AWLVVDSIVDVIFLVDIVLNF. The Cytoplasmic portion of the chain corresponds to 270-290; it reads HTTFVGPAGEVISDPKLIRMN. A helical transmembrane segment spans residues 291–309; sequence YLKTWFVIDLLSCLPYDVI. Residues 310–345 lie on the Extracellular side of the membrane; it reads NAFENVDEVSAFMGDPGKIGFADQIPPPLEGRESQG. A helical; Voltage-sensor membrane pass occupies residues 346–368; sequence ISSLFSSLKVVRLLRLGRVARKL. At 369-377 the chain is on the cytoplasmic side; it reads DHYIEYGAA. A helical transmembrane segment spans residues 378–399; that stretch reads VLVLLVCVFGLAAHWMACIWYS. Residues 400-448 lie on the Extracellular side of the membrane; that stretch reads IGDYEIFDEDTKTIRNNSWLYQLALDIGTPYQFNGSGSGKWEGGPSKNS. 2 N-linked (GlcNAc...) asparagine glycosylation sites follow: Asn415 and Asn433. The segment at residues 449 to 470 is an intramembrane region (pore-forming); the sequence is VYISSLYFTMTSLTSVGFGNIA. The Selectivity filter signature appears at 463–468; it reads SVGFGN. Over 471–477 the chain is Extracellular; it reads PSTDIEK. A helical transmembrane segment spans residues 478-498; that stretch reads IFAVAIMMIGSLLYATIFGNV. The Cytoplasmic portion of the chain corresponds to 499–989; sequence TTIFQQMYAN…ESDRDIFGAS (491 aa). The segment at 673-770 is calmodulin-binding; it reads KRDALQKVLE…LDDLDVEKGN (98 aa). The segment at 699–701 is interaction with cyclic nucleotide-binding pocket; it reads YNL. Basic and acidic residues-rich tracts occupy residues 857–879 and 887–901; these read ESME…KTDS and SDLR…RSPQ. Disordered regions lie at residues 857–905 and 961–989; these read ESME…DRSP and RGSA…FGAS. The tract at residues 924-964 is CAD (involved in subunit assembly); the sequence is ATVLEVKYELKEDIKALNAKMTSIEKQLSEILRILMSRGSA. The span at 962 to 979 shows a compositional bias: polar residues; the sequence is GSAQSPQETGEISRPQSP. Phosphoserine occurs at positions 974, 978, and 981. The segment covering 980 to 989 has biased composition (basic and acidic residues); the sequence is ESDRDIFGAS.

It belongs to the potassium channel family. H (Eag) (TC 1.A.1.20) subfamily. Kv10.1/KCNH1 sub-subfamily. In terms of assembly, homomultimer. The potassium channel is composed of a homo- or heterotetrameric complex of pore-forming alpha subunits that can associate with modulating beta subunits. Heteromultimer with KCNH5/EAG2. Interacts with ALG10B. Interacts with RABEP1. Interacts (via C-terminus) with CTTN. Interacts (via C-terminal cytoplasmic region) with Ca(2+)-bound calmodulin. Channel activity is regulated via tyrosine phosphorylation/dephosphorylation by SRC and PTPN6. Detected in brain (at protein level). Highly expressed in olfactory bulb. Detected in brain cortex, hippocampus, brain stem, striatum, thalamus, hypothalamus and spinal cord.

It is found in the cell membrane. The protein localises to the nucleus inner membrane. The protein resides in the cell projection. It localises to the dendrite. Its subcellular location is the axon. It is found in the presynaptic cell membrane. The protein localises to the perikaryon. The protein resides in the postsynaptic density membrane. It localises to the early endosome membrane. The enzyme catalyses K(+)(in) = K(+)(out). Channel activity is inhibited by interaction with Ca(2+)-bound calmodulin. Interaction of a single pore-forming alpha subunit with a calmodulin chain is sufficient to promote channel closure. Channel activity is not regulated by cyclic nucleotides. Channel activity is inhibited by binding intracellular phosphatidylinositol-3,5-bisphosphate and phosphatidylinositol-4,5-bisphosphate (PIP2), but is not inhibited by phosphatidylinositol 4-phosphate. In terms of biological role, pore-forming (alpha) subunit of a voltage-gated delayed rectifier potassium channel that mediates outward-rectifying potassium currents which, on depolarization, reaches a steady-state level and do not inactivate. The activation kinetics depend on the prepulse potential and external divalent cation concentration. With negative prepulses, the current activation is delayed and slowed down several fold, whereas more positive prepulses speed up activation. The time course of activation is biphasic with a fast and a slowly activating current component. Activates at more positive membrane potentials and exhibit a steeper activation curve. Channel properties are modulated by subunit assembly. Mediates IK(NI) current in myoblasts. Involved in the regulation of cell proliferation and differentiation, in particular adipogenic and osteogenic differentiation in bone marrow-derived mesenchymal stem cells (MSCs). The polypeptide is Voltage-gated delayed rectifier potassium channel KCNH1 (Mus musculus (Mouse)).